An 880-amino-acid polypeptide reads, in one-letter code: DNA mismatch repair protein MutS (880 aa).

ATP is bound at residue 631–638 (GPNMAGKS). The interval 835 to 860 (RAAPPPPAPAAPKTSPVEERLREIQP) is disordered. The segment covering 850–860 (PVEERLREIQP) has biased composition (basic and acidic residues).

It belongs to the DNA mismatch repair MutS family.

Its function is as follows. This protein is involved in the repair of mismatches in DNA. It is possible that it carries out the mismatch recognition step. This protein has a weak ATPase activity. The polypeptide is DNA mismatch repair protein MutS (Cereibacter sphaeroides (strain ATCC 17029 / ATH 2.4.9) (Rhodobacter sphaeroides)).